A 376-amino-acid chain; its full sequence is Lipoprotein p33 (376 aa).

Positions 1–30 are cleaved as a signal peptide; that stretch reads MKIKKIKLLKALALTGAFGIVATVPVIVYS. Residue C31 is the site of N-palmitoyl cysteine attachment. The S-diacylglycerol cysteine moiety is linked to residue C31. A disordered region spans residues 35-59; sequence DNNGGTGDNNTGGGGSGTDQQQGTT. The segment covering 38–51 has biased composition (gly residues); the sequence is GGTGDNNTGGGGSG.

The protein belongs to the p35 lipoprotein family.

It localises to the cell membrane. The sequence is that of Lipoprotein p33 from Malacoplasma penetrans (Mycoplasma penetrans).